We begin with the raw amino-acid sequence, 286 residues long: 4-diphosphocytidyl-2-C-methyl-D-erythritol kinase (286 aa).

K10 is a catalytic residue. 94 to 104 (PVAAGLAGGSS) is a binding site for ATP. The active site involves D136.

This sequence belongs to the GHMP kinase family. IspE subfamily.

It catalyses the reaction 4-CDP-2-C-methyl-D-erythritol + ATP = 4-CDP-2-C-methyl-D-erythritol 2-phosphate + ADP + H(+). It functions in the pathway isoprenoid biosynthesis; isopentenyl diphosphate biosynthesis via DXP pathway; isopentenyl diphosphate from 1-deoxy-D-xylulose 5-phosphate: step 3/6. Catalyzes the phosphorylation of the position 2 hydroxy group of 4-diphosphocytidyl-2C-methyl-D-erythritol. The chain is 4-diphosphocytidyl-2-C-methyl-D-erythritol kinase from Exiguobacterium sibiricum (strain DSM 17290 / CCUG 55495 / CIP 109462 / JCM 13490 / 255-15).